The chain runs to 574 residues: Membrane protein insertase YidC (574 aa).

The helical transmembrane segment at 6 to 26 (VFLIFAWLMVAALLWMEWGKD) threads the bilayer. Residues 45-77 (RDPDAAAPSAANVPSAQPIPQAGAPGTVPATSS) are disordered. Transmembrane regions (helical) follow at residues 356-376 (FSIM…LHSF), 380-400 (WGWA…PLSA), 447-467 (GGCL…WVLV), 489-509 (PYFI…KLTP), and 525-545 (PLVF…YWVV).

This sequence belongs to the OXA1/ALB3/YidC family. Type 1 subfamily. Interacts with the Sec translocase complex via SecD. Specifically interacts with transmembrane segments of nascent integral membrane proteins during membrane integration.

The protein localises to the cell inner membrane. Its function is as follows. Required for the insertion and/or proper folding and/or complex formation of integral membrane proteins into the membrane. Involved in integration of membrane proteins that insert both dependently and independently of the Sec translocase complex, as well as at least some lipoproteins. Aids folding of multispanning membrane proteins. This is Membrane protein insertase YidC from Xanthomonas euvesicatoria pv. vesicatoria (strain 85-10) (Xanthomonas campestris pv. vesicatoria).